Here is a 166-residue protein sequence, read N- to C-terminus: Large ribosomal subunit protein mL41 (166 aa).

A mitochondrion-targeting transit peptide spans 1–26 (MNNCIKVVPIALRCQQRTISTSSVLE). Residues 136-166 (KDGSAKEPSVNEQLTPEEALQRARKTGSDIF) are disordered.

It belongs to the mitochondrion-specific ribosomal protein mL41 family. In terms of assembly, component of the mitochondrial ribosome large subunit (39S) which comprises a 16S rRNA and about 50 distinct proteins.

It localises to the mitochondrion. In Drosophila melanogaster (Fruit fly), this protein is Large ribosomal subunit protein mL41 (mRpL41).